The sequence spans 327 residues: Ubiquinone biosynthesis O-methyltransferase, mitochondrial (327 aa).

Residues arginine 79, glycine 142, aspartate 165, and phenylalanine 210 each contribute to the S-adenosyl-L-methionine site. Positions 211, 214, and 215 each coordinate Mg(2+).

The protein belongs to the class I-like SAM-binding methyltransferase superfamily. UbiG/COQ3 family. In terms of assembly, component of a multi-subunit COQ enzyme complex, composed of at least COQ3, COQ4, COQ5, COQ6, COQ7 and COQ9. The cofactor is Mg(2+).

Its subcellular location is the mitochondrion inner membrane. The catalysed reaction is a 3,4-dihydroxy-5-(all-trans-polyprenyl)benzoate + S-adenosyl-L-methionine = a 4-hydroxy-3-methoxy-5-(all-trans-polyprenyl)benzoate + S-adenosyl-L-homocysteine + H(+). The enzyme catalyses a 3-demethylubiquinone + S-adenosyl-L-methionine = a ubiquinone + S-adenosyl-L-homocysteine. It catalyses the reaction a 3-demethylubiquinol + S-adenosyl-L-methionine = a ubiquinol + S-adenosyl-L-homocysteine + H(+). It functions in the pathway cofactor biosynthesis; ubiquinone biosynthesis. Its function is as follows. O-methyltransferase required for two non-consecutive steps during ubiquinone biosynthesis. Catalyzes the 2 O-methylation of 3,4-dihydroxy-5-(all-trans-polyprenyl)benzoic acid into 4-hydroxy-3-methoxy-5-(all-trans-polyprenyl)benzoic acid. Also catalyzes the last step of ubiquinone biosynthesis by mediating methylation of 3-demethylubiquinone into ubiquinone. Also able to mediate the methylation of 3-demethylubiquinol into ubiquinol. The chain is Ubiquinone biosynthesis O-methyltransferase, mitochondrial from Candida albicans (Yeast).